The following is a 295-amino-acid chain: Pyridoxal 5'-phosphate synthase subunit PdxS (295 aa).

Asp25 serves as a coordination point for D-ribose 5-phosphate. The active-site Schiff-base intermediate with D-ribose 5-phosphate is Lys82. Gly154 serves as a coordination point for D-ribose 5-phosphate. Arg166 lines the D-glyceraldehyde 3-phosphate pocket. Residues Gly215 and 236–237 (GS) contribute to the D-ribose 5-phosphate site.

This sequence belongs to the PdxS/SNZ family. In terms of assembly, in the presence of PdxT, forms a dodecamer of heterodimers.

The catalysed reaction is aldehydo-D-ribose 5-phosphate + D-glyceraldehyde 3-phosphate + L-glutamine = pyridoxal 5'-phosphate + L-glutamate + phosphate + 3 H2O + H(+). Its pathway is cofactor biosynthesis; pyridoxal 5'-phosphate biosynthesis. Catalyzes the formation of pyridoxal 5'-phosphate from ribose 5-phosphate (RBP), glyceraldehyde 3-phosphate (G3P) and ammonia. The ammonia is provided by the PdxT subunit. Can also use ribulose 5-phosphate and dihydroxyacetone phosphate as substrates, resulting from enzyme-catalyzed isomerization of RBP and G3P, respectively. The polypeptide is Pyridoxal 5'-phosphate synthase subunit PdxS (Shouchella clausii (strain KSM-K16) (Alkalihalobacillus clausii)).